Reading from the N-terminus, the 211-residue chain is Thiamine-phosphate synthase (211 aa).

4-amino-2-methyl-5-(diphosphooxymethyl)pyrimidine contacts are provided by residues 36–40 (QLRDK) and asparagine 68. Aspartate 69 and aspartate 88 together coordinate Mg(2+). Residue serine 107 coordinates 4-amino-2-methyl-5-(diphosphooxymethyl)pyrimidine. 133–135 (TKS) is a 2-[(2R,5Z)-2-carboxy-4-methylthiazol-5(2H)-ylidene]ethyl phosphate binding site. Lysine 136 is a 4-amino-2-methyl-5-(diphosphooxymethyl)pyrimidine binding site. 2-[(2R,5Z)-2-carboxy-4-methylthiazol-5(2H)-ylidene]ethyl phosphate contacts are provided by residues glycine 164 and 184–185 (IS).

The protein belongs to the thiamine-phosphate synthase family. It depends on Mg(2+) as a cofactor.

It carries out the reaction 2-[(2R,5Z)-2-carboxy-4-methylthiazol-5(2H)-ylidene]ethyl phosphate + 4-amino-2-methyl-5-(diphosphooxymethyl)pyrimidine + 2 H(+) = thiamine phosphate + CO2 + diphosphate. It catalyses the reaction 2-(2-carboxy-4-methylthiazol-5-yl)ethyl phosphate + 4-amino-2-methyl-5-(diphosphooxymethyl)pyrimidine + 2 H(+) = thiamine phosphate + CO2 + diphosphate. The enzyme catalyses 4-methyl-5-(2-phosphooxyethyl)-thiazole + 4-amino-2-methyl-5-(diphosphooxymethyl)pyrimidine + H(+) = thiamine phosphate + diphosphate. Its pathway is cofactor biosynthesis; thiamine diphosphate biosynthesis; thiamine phosphate from 4-amino-2-methyl-5-diphosphomethylpyrimidine and 4-methyl-5-(2-phosphoethyl)-thiazole: step 1/1. Its function is as follows. Condenses 4-methyl-5-(beta-hydroxyethyl)thiazole monophosphate (THZ-P) and 2-methyl-4-amino-5-hydroxymethyl pyrimidine pyrophosphate (HMP-PP) to form thiamine monophosphate (TMP). This Halalkalibacterium halodurans (strain ATCC BAA-125 / DSM 18197 / FERM 7344 / JCM 9153 / C-125) (Bacillus halodurans) protein is Thiamine-phosphate synthase.